The primary structure comprises 390 residues: Probable tRNA sulfurtransferase (390 aa).

The 103-residue stretch at 60 to 162 (KQIIDDLKEV…YDCAIVYGHK (103 aa)) folds into the THUMP domain. Residues 180-181 (LL), 205-206 (TF), Arg264, Gly286, and Gln295 contribute to the ATP site.

This sequence belongs to the ThiI family.

The protein localises to the cytoplasm. It carries out the reaction [ThiI sulfur-carrier protein]-S-sulfanyl-L-cysteine + a uridine in tRNA + 2 reduced [2Fe-2S]-[ferredoxin] + ATP + H(+) = [ThiI sulfur-carrier protein]-L-cysteine + a 4-thiouridine in tRNA + 2 oxidized [2Fe-2S]-[ferredoxin] + AMP + diphosphate. The enzyme catalyses [ThiS sulfur-carrier protein]-C-terminal Gly-Gly-AMP + S-sulfanyl-L-cysteinyl-[cysteine desulfurase] + AH2 = [ThiS sulfur-carrier protein]-C-terminal-Gly-aminoethanethioate + L-cysteinyl-[cysteine desulfurase] + A + AMP + 2 H(+). Its pathway is cofactor biosynthesis; thiamine diphosphate biosynthesis. Catalyzes the ATP-dependent transfer of a sulfur to tRNA to produce 4-thiouridine in position 8 of tRNAs, which functions as a near-UV photosensor. Also catalyzes the transfer of sulfur to the sulfur carrier protein ThiS, forming ThiS-thiocarboxylate. This is a step in the synthesis of thiazole, in the thiamine biosynthesis pathway. The sulfur is donated as persulfide by IscS. This Ureaplasma parvum serovar 3 (strain ATCC 27815 / 27 / NCTC 11736) protein is Probable tRNA sulfurtransferase.